The primary structure comprises 455 residues: MSFFADSVLMVISQLLFFGFGWLFFMRQLFKDYEVRQYVVQVVFSVTFAFSCTMFELIIFEILGLLNSSSRYFHWKLNLCVILLVLVFVVPFYIGYFVVSNIRLLHRQRLLFSCTIWLTFMYFFWKLGDPFPILSPKHGILSIEQLISRVGVIGVTLMALLSGFGAVNCPYTYMSYFLRNVTDADILALERRLLQTMDMIVSKKKRIAAVRRNMFQRGEEHSKPSGFWGMIKSVTSSAPVSENLYQIQQEVDALEELSRQLFLETADLHATKERIEYSKTFQGKYFNFLGYFFSIYCVWKIFMATINIVFDRVGKTDPVTRGIEITVNYLGIQFDVKFWSQHISFILVGIIIVTSIRGLLITLTKFFYAISSSKSSNVIVLLLAQIMGMYFVSSVLLIRMSMPLEYRTIITEVLGELQFNFYHRWFDVIFLVSALSSILFLYLAHKQAPEKHMAL.

Helical transmembrane passes span 5–25 (ADSV…WLFF) and 46–66 (VTFA…LGLL). Asn-67 carries N-linked (GlcNAc...) asparagine glycosylation. The next 3 helical transmembrane spans lie at 79-99 (LCVI…YFVV), 111-131 (LFSC…GDPF), and 150-170 (VGVI…VNCP). A glycan (N-linked (GlcNAc...) asparagine) is linked at Asn-180. The next 4 helical transmembrane spans lie at 290 to 310 (GYFF…NIVF), 343 to 363 (ISFI…LITL), 378 to 398 (VIVL…VLLI), and 425 to 445 (WFDV…YLAH).

This sequence belongs to the Golgi pH regulator (TC 1.A.38) family. Homotrimer.

The protein localises to the golgi apparatus membrane. It catalyses the reaction iodide(out) = iodide(in). The enzyme catalyses chloride(in) = chloride(out). The catalysed reaction is bromide(in) = bromide(out). It carries out the reaction fluoride(in) = fluoride(out). Its function is as follows. Voltage-gated channel that enables the transfer of anions such as iodide, chloride, bromide and fluoride which may function in counter-ion conductance and participates in Golgi acidification. This is Golgi pH regulator (gpr89-b) from Xenopus laevis (African clawed frog).